A 205-amino-acid polypeptide reads, in one-letter code: Methylthioribulose-1-phosphate dehydratase (205 aa).

Zn(2+) contacts are provided by histidine 94 and histidine 96.

This sequence belongs to the aldolase class II family. MtnB subfamily. Zn(2+) is required as a cofactor.

It catalyses the reaction 5-(methylsulfanyl)-D-ribulose 1-phosphate = 5-methylsulfanyl-2,3-dioxopentyl phosphate + H2O. The protein operates within amino-acid biosynthesis; L-methionine biosynthesis via salvage pathway; L-methionine from S-methyl-5-thio-alpha-D-ribose 1-phosphate: step 2/6. Functionally, catalyzes the dehydration of methylthioribulose-1-phosphate (MTRu-1-P) into 2,3-diketo-5-methylthiopentyl-1-phosphate (DK-MTP-1-P). The chain is Methylthioribulose-1-phosphate dehydratase from Pectobacterium atrosepticum (strain SCRI 1043 / ATCC BAA-672) (Erwinia carotovora subsp. atroseptica).